The following is a 285-amino-acid chain: MTDLHQTYYRQVKNPNPVFTPREGAGTLKFCEKLMEKAVGFTSRFDFAIHVAHARSRGLRRRMPPVLRRRAIDALLQGLCFHYDPLANRVQCSITTLAIECGLATESAAGKLSITRATRALTFLSELGLITYQTEYDPLIGCYIPTDITFTSALFAALDVSEEAVAAARRSRVVWENKQRKKQGLDTLGMDELIAKAWRFVRERFRSYQTELKSRGIKRARARRDADRERQDIVTLVKRQLTREIAEGRFTANREAVKREVERRVKERMILSRNRNYSRLATASP.

Belongs to the IncFII RepA family.

This protein is essential for plasmid replication; it is involved in copy control functions. The chain is Replication initiation protein (repA) from Escherichia coli.